We begin with the raw amino-acid sequence, 422 residues long: Acylglycerol kinase, mitochondrial (422 aa).

N6-acetyllysine is present on Lys6. A hydrophobic region spans residues 15 to 31 (TTAGLCLLTWGGHWLYG). In terms of domain architecture, DAGKc spans 58–199 (AQVKKATVFL…LDVLQIKGEK (142 aa)). The disordered stretch occupies residues 249-271 (QASISYTGPTERPPNEPEETPVQ).

It belongs to the AGK family. Component of the TIM22 complex, which core is composed of TIMM22, associated with TIMM10 (TIMM10A and/or TIMM10B), TIMM9, AGK and TIMM29. Interacts with SMIM26. The cofactor is Mg(2+). Highly expressed in muscle, heart, kidney and brain.

The protein resides in the mitochondrion inner membrane. Its subcellular location is the mitochondrion intermembrane space. It carries out the reaction a monoacylglycerol + ATP = a monoacyl-sn-glycero-3-phosphate + ADP + H(+). The enzyme catalyses a 1,2-diacyl-sn-glycerol + ATP = a 1,2-diacyl-sn-glycero-3-phosphate + ADP + H(+). It catalyses the reaction an N-acylsphing-4-enine + ATP = an N-acylsphing-4-enine 1-phosphate + ADP + H(+). The catalysed reaction is 1-(9Z-octadecenoyl)-sn-glycerol + ATP = 1-(9Z-octadecenoyl)-sn-glycero-3-phosphate + ADP + H(+). It carries out the reaction 1,2-di-(9Z-octadecenoyl)-sn-glycerol + ATP = 1,2-di-(9Z-octadecenoyl)-sn-glycero-3-phosphate + ADP + H(+). The enzyme catalyses a 1-acyl-sn-glycerol + ATP = a 1-acyl-sn-glycero-3-phosphate + ADP + H(+). It catalyses the reaction 1-hexadecanoyl-sn-glycerol + ATP = 1-hexadecanoyl-sn-glycero-3-phosphate + ADP + H(+). The catalysed reaction is a 2-acylglycerol + ATP = a 2-acyl-sn-glycerol 3-phosphate + ADP + H(+). It carries out the reaction 2-(5Z,8Z,11Z,14Z-eicosatetraenoyl)-glycerol + ATP = 2-(5Z,8Z,11Z,14Z-eicosatetraenoyl)-sn-glycero-3-phosphate + ADP + H(+). The enzyme catalyses 1-(5Z,8Z,11Z,14Z-eicosatetraenoyl)-sn-glycerol + ATP = 1-(5Z,8Z,11Z,14Z-eicosatetraenoyl)-sn-glycero-3-phosphate + ADP + H(+). It catalyses the reaction N-(hexanoyl)sphing-4-enine + ATP = N-hexanoylsphing-4-enine 1-phosphate + ADP + H(+). The protein operates within lipid metabolism; glycerolipid metabolism. In terms of biological role, lipid kinase that can phosphorylate both monoacylglycerol and diacylglycerol to form lysophosphatidic acid (LPA) and phosphatidic acid (PA), respectively. Does not phosphorylate sphingosine. Phosphorylates ceramide. Phosphorylates 1,2-dioleoylglycerol more rapidly than 2,3-dioleoylglycerol. Independently of its lipid kinase activity, acts as a component of the TIM22 complex. The TIM22 complex mediates the import and insertion of multi-pass transmembrane proteins into the mitochondrial inner membrane by forming a twin-pore translocase that uses the membrane potential as the external driving force. In the TIM22 complex, required for the import of a subset of metabolite carriers into mitochondria, such as ANT1/SLC25A4 and SLC25A24, while it is not required for the import of TIMM23. Overexpression increases the formation and secretion of LPA, resulting in transactivation of EGFR and activation of the downstream MAPK signaling pathway, leading to increased cell growth. The sequence is that of Acylglycerol kinase, mitochondrial from Homo sapiens (Human).